The primary structure comprises 322 residues: Interferon regulatory factor 1 (322 aa).

Positions 5–113 (RMRMRPWLEM…SAVRVYRMLP (109 aa)) form a DNA-binding region, IRF tryptophan pentad repeat. At K78 the chain carries N6-acetyllysine. A disordered region spans residues 92–164 (EEVKDQSRNK…STLPDDHSNY (73 aa)). Residues 146-157 (DTFSDGLSSSTL) show a composition bias toward polar residues. Residues K276 and K296 each participate in a glycyl lysine isopeptide (Lys-Gly) (interchain with G-Cter in SUMO) cross-link.

This sequence belongs to the IRF family. Monomer. Homodimer. Interacts with EP300. Interacts with MYD88. Interacts with PIAS3. Interacts with SPOP. Post-translationally, phosphorylated by CK2 and this positively regulates its activity. Sumoylation represses the transcriptional activity and displays enhanced resistance to protein degradation. Sumoylated by UBE2I/UBC9 and SUMO1. Inactivates the tumor suppressor activity. Elevated levels in tumor cells. Major site is Lys-276. Sumoylation is enhanced by PIAS3. Desumoylated by SENP1 in tumor cells and appears to compete with ubiquitination on C-terminal sites. In terms of processing, ubiquitinated in a SPOP-depedent manner. Appears to compete with sumoylation on C-terminal sites.

The protein localises to the nucleus. The protein resides in the cytoplasm. With respect to regulation, activated by MYD88. Its function is as follows. Transcriptional regulator which displays a remarkable functional diversity in the regulation of cellular responses. Regulates transcription of IFN and IFN-inducible genes, host response to viral and bacterial infections, regulation of many genes expressed during hematopoiesis, inflammation, immune responses and cell proliferation and differentiation, regulation of the cell cycle and induction of growth arrest and programmed cell death following DNA damage. Stimulates both innate and acquired immune responses through the activation of specific target genes and can act as a transcriptional activator and repressor regulating target genes by binding to an interferon-stimulated response element (ISRE) in their promoters. Has an essentail role in IFNG-dependent immunity to mycobacteria. Binds to a consensus sequence in gene promoters. Its target genes for transcriptional activation activity include: genes involved in anti-viral response, such as IFN-alpha/beta, RIGI, TNFSF10/TRAIL, ZBP1, OAS1/2, PIAS1/GBP, EIF2AK2/PKR and RSAD2/viperin; antibacterial response, such as GBP2, GBP5 and NOS2/INOS; anti-proliferative response, such as p53/TP53, LOX and CDKN1A; apoptosis, such as BBC3/PUMA, CASP1, CASP7 and CASP8; immune response, such as IL7, IL12A/B and IL15, PTGS2/COX2 and CYBB; DNA damage responses and DNA repair, such as POLQ/POLH; MHC class I expression, such as TAP1, PSMB9/LMP2, PSME1/PA28A, PSME2/PA28B and B2M and MHC class II expression, such as CIITA; metabolic enzymes, such as ACOD1/IRG1. Represses genes involved in anti-proliferative response, such as BIRC5/survivin, CCNB1, CCNE1, CDK1, CDK2 and CDK4 and in immune response, such as FOXP3, IL4, ANXA2 and TLR4. Stimulates p53/TP53-dependent transcription through enhanced recruitment of EP300 leading to increased acetylation of p53/TP53. Plays an important role in immune response directly affecting NK maturation and activity, macrophage production of IL12, Th1 development and maturation of CD8+ T-cells. Also implicated in the differentiation and maturation of dendritic cells and in the suppression of regulatory T (Treg) cells development. Acts as a tumor suppressor and plays a role not only in antagonism of tumor cell growth but also in stimulating an immune response against tumor cells. The sequence is that of Interferon regulatory factor 1 (IRF1) from Bos taurus (Bovine).